Consider the following 948-residue polypeptide: Zinc finger CCCH domain-containing protein 18 (948 aa).

Met1 bears the N-acetylmethionine mark. The segment at 1–219 (MDVAESPELD…SDRKVRPRPT (219 aa)) is disordered. The residue at position 6 (Ser6) is a Phosphoserine. Positions 15–25 (EDEEQPALSDD) are enriched in acidic residues. Phosphoserine is present on residues Ser33, Ser45, Ser58, Ser64, Ser71, Ser75, Ser80, and Ser92. Over residues 70–86 (ASEPKSQDQDSEAHELS) the composition is skewed to basic and acidic residues. Acidic residues predominate over residues 95-105 (EEGDDVEEDGT). A Phosphothreonine modification is found at Thr105. Phosphoserine is present on residues Ser106 and Ser114. The span at 106–120 (SDLRDEASSVTRELD) shows a compositional bias: basic and acidic residues. 2 stretches are compositionally biased toward acidic residues: residues 121-132 (EHELDYDEEVPE) and 139-154 (QEEE…EEEK). Phosphoserine is present on Ser169. The segment covering 177–186 (EAAKEKKKED) has biased composition (basic and acidic residues). Positions 187–203 (DDGEIDDGEIDDDDLEE) are enriched in acidic residues. Basic and acidic residues predominate over residues 204 to 213 (GEVKDPSDRK). A C3H1-type zinc finger spans residues 215-241 (RPRPTCRFFMKGNCTWGMSCRFIHPGV). Gly245 carries the omega-N-methylarginine modification. 2 disordered regions span residues 272–296 (ANPW…TESA) and 388–922 (YTEA…TLSR). Positions 392–480 (EPYHNYRERE…DREKDKEKPK (89 aa)) are enriched in basic and acidic residues. The stretch at 395–460 (HNYRERERER…RERAKRDEKD (66 aa)) forms a coiled coil. Ser483 is subject to Phosphoserine. A Glycyl lysine isopeptide (Lys-Gly) (interchain with G-Cter in SUMO2) cross-link involves residue Lys506. Positions 506 to 516 (KRADEWKDPWR) are enriched in basic and acidic residues. Ser528, Ser530, and Ser532 each carry phosphoserine. Over residues 541–602 (SASSASASNS…SRSRSFSSSP (62 aa)) the composition is skewed to low complexity. Residues 603-612 (SPSPTPSPHR) are compositionally biased toward pro residues. Glycyl lysine isopeptide (Lys-Gly) (interchain with G-Cter in SUMO2) cross-links involve residues Lys618 and Lys657. A compositionally biased stretch (basic and acidic residues) spans 657 to 666 (KPGDLREARR). 2 stretches are compositionally biased toward low complexity: residues 688 to 721 (GSSY…SVHS) and 732 to 746 (ASPV…PTPA). Basic and acidic residues predominate over residues 756-770 (KKEDGVREEKRRRDP). Residues 774-804 (PPKSSKAPAGGKASQQAAAPQPAVPGQPQQG) are compositionally biased toward low complexity. The residue at position 810 (Lys810) is an N6-acetyllysine. Lys813 participates in a covalent cross-link: Glycyl lysine isopeptide (Lys-Gly) (interchain with G-Cter in SUMO2). Residues 820–837 (AADKGSRKRYEPSDKDRQ) are compositionally biased toward basic and acidic residues. Residues Ser838, Ser847, Ser863, Ser888, and Ser891 each carry the phosphoserine modification. The span at 888 to 898 (SPQSKGSSKVT) shows a compositional bias: polar residues. The span at 902 to 919 (GKATDTATAGTKSGKAST) shows a compositional bias: low complexity. A Glycyl lysine isopeptide (Lys-Gly) (interchain with G-Cter in SUMO2) cross-link involves residue Lys903. The stretch at 916-945 (KASTLSRREELLKQLKAVEDAIARKRAKIP) forms a coiled coil.

In terms of assembly, interacts with ZFC3H1 in a RNase-insensitive manner.

It localises to the nucleus. This Mus musculus (Mouse) protein is Zinc finger CCCH domain-containing protein 18 (Zc3h18).